Consider the following 245-residue polypeptide: 1-(5-phosphoribosyl)-5-[(5-phosphoribosylamino)methylideneamino] imidazole-4-carboxamide isomerase (245 aa).

The active-site Proton acceptor is the aspartate 7. The Proton donor role is filled by aspartate 129.

The protein belongs to the HisA/HisF family.

The protein localises to the cytoplasm. The catalysed reaction is 1-(5-phospho-beta-D-ribosyl)-5-[(5-phospho-beta-D-ribosylamino)methylideneamino]imidazole-4-carboxamide = 5-[(5-phospho-1-deoxy-D-ribulos-1-ylimino)methylamino]-1-(5-phospho-beta-D-ribosyl)imidazole-4-carboxamide. It functions in the pathway amino-acid biosynthesis; L-histidine biosynthesis; L-histidine from 5-phospho-alpha-D-ribose 1-diphosphate: step 4/9. The chain is 1-(5-phosphoribosyl)-5-[(5-phosphoribosylamino)methylideneamino] imidazole-4-carboxamide isomerase from Aliivibrio fischeri (strain ATCC 700601 / ES114) (Vibrio fischeri).